A 290-amino-acid polypeptide reads, in one-letter code: Translin-associated protein X (290 aa).

The tract at residues 1-31 (MNGKEGPGGFRKRKHDTFPHNQRREGKDASL) is disordered. Residues 16–28 (DTFPHNQRREGKD) are compositionally biased toward basic and acidic residues. Positions 73–208 (LLHRITSAPD…MRMCINSVGN (136 aa)) are interaction with C1D. Positions 129 and 197 each coordinate Mg(2+). A Glycyl lysine isopeptide (Lys-Gly) (interchain with G-Cter in SUMO2) cross-link involves residue K279.

Belongs to the translin family. In terms of assembly, ring-shaped heterooctamer of six TSN and two TSNAX subunits. Interacts with GOLGA3, TSNAXIP1, SUN1 and AKAP9. Interacts with the homodimeric form of C1D following gamma-radiation. Interacts with TSN and C1D in a mutually exclusive manner. Sumoylated with SUMO1. Detected in heart, brain, lung, liver, kidney and testis.

Its subcellular location is the cytoplasm. It is found in the perinuclear region. The protein localises to the golgi apparatus. The protein resides in the nucleus. In terms of biological role, acts in combination with TSN as an endonuclease involved in the activation of the RNA-induced silencing complex (RISC). Possible role in spermatogenesis. This is Translin-associated protein X (Tsnax) from Mus musculus (Mouse).